The primary structure comprises 260 residues: Small ribosomal subunit protein bS6 (260 aa).

The protein belongs to the bacterial ribosomal protein bS6 family.

In terms of biological role, binds together with bS18 to 16S ribosomal RNA. This is Small ribosomal subunit protein bS6 from Wolbachia sp. subsp. Brugia malayi (strain TRS).